The chain runs to 88 residues: MCFSPKIKTPKMDTNQIRAVEPAPLTQEVSSVEFGGSSDETDTEGTEVSGRKGLKVERDDSVAKSKASGNGSARMKSSIRKSAFGGKK.

The segment at 1–88 is disordered; it reads MCFSPKIKTP…IRKSAFGGKK (88 aa). Residues 54 to 63 are compositionally biased toward basic and acidic residues; it reads LKVERDDSVA.

It localises to the virion. Its function is as follows. Plays a role in virion morphogenesis, and is ejected from the infecting particle into the bacterial cell. The sequence is that of Protein 6.7 from Escherichia coli (Bacteriophage T7).